The primary structure comprises 332 residues: Anthranilate phosphoribosyltransferase (332 aa).

5-phospho-alpha-D-ribose 1-diphosphate-binding positions include Gly78, 81–82 (GD), Ser86, 88–91 (NIST), 106–114 (KHGNKSITS), and Ser118. Gly78 is a binding site for anthranilate. Residue Ser90 participates in Mg(2+) binding. Asn109 is a binding site for anthranilate. Arg163 serves as a coordination point for anthranilate. Mg(2+) contacts are provided by Asp222 and Glu223.

The protein belongs to the anthranilate phosphoribosyltransferase family. As to quaternary structure, homodimer. It depends on Mg(2+) as a cofactor.

It carries out the reaction N-(5-phospho-beta-D-ribosyl)anthranilate + diphosphate = 5-phospho-alpha-D-ribose 1-diphosphate + anthranilate. Its pathway is amino-acid biosynthesis; L-tryptophan biosynthesis; L-tryptophan from chorismate: step 2/5. Its function is as follows. Catalyzes the transfer of the phosphoribosyl group of 5-phosphorylribose-1-pyrophosphate (PRPP) to anthranilate to yield N-(5'-phosphoribosyl)-anthranilate (PRA). In Staphylococcus aureus (strain Mu3 / ATCC 700698), this protein is Anthranilate phosphoribosyltransferase.